We begin with the raw amino-acid sequence, 239 residues long: Ribonuclease HII (239 aa).

An RNase H type-2 domain is found at 30 to 221 (GPVAGVDEVG…VRRVANGSGG (192 aa)). A divalent metal cation is bound by residues Asp36, Glu37, and Asp130.

It belongs to the RNase HII family. Mn(2+) serves as cofactor. The cofactor is Mg(2+).

It localises to the cytoplasm. The catalysed reaction is Endonucleolytic cleavage to 5'-phosphomonoester.. Endonuclease that specifically degrades the RNA of RNA-DNA hybrids. The protein is Ribonuclease HII of Mycolicibacterium paratuberculosis (strain ATCC BAA-968 / K-10) (Mycobacterium paratuberculosis).